Reading from the N-terminus, the 178-residue chain is Flagellar transcriptional regulator FlhC (178 aa).

Cys-138, Cys-141, Cys-158, and Cys-161 together coordinate Zn(2+).

Belongs to the FlhC family. Heterohexamer composed of two FlhC and four FlhD subunits. Each FlhC binds a FlhD dimer, forming a heterotrimer, and a hexamer assembles by dimerization of two heterotrimers. It depends on Zn(2+) as a cofactor.

The protein localises to the cytoplasm. Functionally, functions in complex with FlhD as a master transcriptional regulator that regulates transcription of several flagellar and non-flagellar operons by binding to their promoter region. Activates expression of class 2 flagellar genes, including fliA, which is a flagellum-specific sigma factor that turns on the class 3 genes. Also regulates genes whose products function in a variety of physiological pathways. In Erwinia tasmaniensis (strain DSM 17950 / CFBP 7177 / CIP 109463 / NCPPB 4357 / Et1/99), this protein is Flagellar transcriptional regulator FlhC.